We begin with the raw amino-acid sequence, 262 residues long: MKTFLILALLAIVATTATTAVRVPVPQLQPQNPSQQQPQEQVPLVQQQQFLGQQQPFPPQQPYPQPQPFPSQQPYLQLQPFLQPQLPYSQPQPFRPQQPYPQPQPQYSQPQQPISQQQQQQQQQQQQQQQQQQQIIQQILQQQLIPCMDVVLQQHNIVHGKSQVLQQSTYQLLQELCCQHLWQIPEQSQCQAIHNVVHAIILHQQQKQQQQPSSQVSFQQPLQQYPLGQGSFRPSQQNPQAQGSVQPQQLPQFEEIRNLARK.

The signal sequence occupies residues 1 to 20 (MKTFLILALLAIVATTATTA). Disordered regions lie at residues 51–73 (LGQQ…PSQQ), 87–120 (PYSQ…QQQQ), and 225–251 (YPLG…QQLP). Composition is skewed to pro residues over residues 56-71 (PFPP…PFPS) and 93-104 (PFRPQQPYPQPQ). Residues 105 to 120 (PQYSQPQQPISQQQQQ) are compositionally biased toward low complexity. Positions 232–251 (FRPSQQNPQAQGSVQPQQLP) are enriched in polar residues.

This sequence belongs to the gliadin/glutenin family. Post-translationally, substrate of transglutaminase.

Gliadin is the major seed storage protein in wheat. In Triticum aestivum (Wheat), this protein is Alpha/beta-gliadin A-I.